Reading from the N-terminus, the 287-residue chain is ATP synthase gamma chain (287 aa).

Belongs to the ATPase gamma chain family. In terms of assembly, F-type ATPases have 2 components, CF(1) - the catalytic core - and CF(0) - the membrane proton channel. CF(1) has five subunits: alpha(3), beta(3), gamma(1), delta(1), epsilon(1). CF(0) has three main subunits: a, b and c.

It localises to the cell membrane. Its function is as follows. Produces ATP from ADP in the presence of a proton gradient across the membrane. The gamma chain is believed to be important in regulating ATPase activity and the flow of protons through the CF(0) complex. The sequence is that of ATP synthase gamma chain from Bacillus caldotenax.